The sequence spans 290 residues: Uridine diphosphate glucose pyrophosphatase NUDT22 (290 aa).

The substrate site is built by Phe56, Tyr87, Arg139, Ala144, Asp151, His156, and Glu158. One can recognise a Nudix hydrolase domain in the interval 118 to 285 (ADPLGVGAAL…KGAIFLYNRV (168 aa)). The short motif at 175–196 (GELVVHELFSSVLQEICDEVNV) is the Nudix box element. Residues Glu189 and Glu193 each coordinate Mg(2+). Ser274 serves as a coordination point for substrate.

Belongs to the Nudix family. Requires Mg(2+) as cofactor.

The catalysed reaction is UDP-sugar + H2O = UMP + alpha-D-aldose 1-phosphate.. Functionally, hydrolyzes UDP-glucose to glucose 1-phosphate and UMP and UDP-galactose to galactose 1-phosphate and UMP. Preferred substrate is UDP-glucose. The protein is Uridine diphosphate glucose pyrophosphatase NUDT22 (NUDT22) of Bos taurus (Bovine).